A 43-amino-acid polypeptide reads, in one-letter code: Protein PsbN (43 aa).

The chain crosses the membrane as a helical span at residues 5–27; the sequence is TLFAISISCLLVSFTGYALYTAF.

It belongs to the PsbN family.

Its subcellular location is the plastid. It localises to the chloroplast thylakoid membrane. In terms of biological role, may play a role in photosystem I and II biogenesis. In Thuja plicata (Western red-cedar), this protein is Protein PsbN.